The primary structure comprises 240 residues: Ribonuclease HII (240 aa).

Residues 31-222 (RLIAGVDEAG…VRRALGLETA (192 aa)) enclose the RNase H type-2 domain. Asp37, Glu38, and Asp130 together coordinate a divalent metal cation.

Belongs to the RNase HII family. It depends on Mn(2+) as a cofactor. The cofactor is Mg(2+).

It is found in the cytoplasm. The enzyme catalyses Endonucleolytic cleavage to 5'-phosphomonoester.. Its function is as follows. Endonuclease that specifically degrades the RNA of RNA-DNA hybrids. The sequence is that of Ribonuclease HII from Xanthomonas campestris pv. campestris (strain 8004).